Reading from the N-terminus, the 409-residue chain is Serine protease inhibitor 2 (409 aa).

Positions 1–21 (MNKLNFVILCLAALLVFDATA) are cleaved as a signal peptide. 2 N-linked (GlcNAc...) asparagine glycosylation sites follow: Asn-294 and Asn-324. Positions 356 to 360 (LGSEA) match the Hinge region; required for binding to peptidase motif.

It belongs to the serpin family. Forms a covalent heterodimer with protease CLIPB9; the interaction inhibits CLIPB9 protease activity. Forms a covalent heterodimer with protease CLIPB10; the interaction inhibits CLIPB10 catalytic activity. Interacts with CLIPB4 in the hemolymph of immune-challenged female mosquitoes; the interaction results in CLIPB4 inhibition. Protease CLIPB9 binds to SRPN2 via the hinge region resulting in the cleavage of the reactive bond. This leads to a conformational change in SRPN2 which traps CLIPB9 and distorts its active site, resulting in CLIPB9 inactivation.

It localises to the secreted. In terms of biological role, serine protease inhibitor that functions in the melanization-mediated immune response. By preventing the activation of phenoloxidases through the inhibiting of serine proteases CLIPB9, CLIPB10 and CLIPB4, negatively regulates melanization in the hemolymph. By preventing melanization, has a detrimental role during P.berghei parasite mediated-infection and invasion of the mosquito midgut. This is Serine protease inhibitor 2 from Anopheles gambiae (African malaria mosquito).